The sequence spans 1105 residues: KAT8 regulatory NSL complex subunit 1 (1105 aa).

Lys104 carries the post-translational modification N6-acetyllysine. 2 disordered regions span residues 145–211 and 225–263; these read GQTA…CTLP and NNSTANKSSVNSMEQPALQGSSRLSPGTDSSSNLGGVKL. A compositionally biased stretch (polar residues) spans 225 to 258; that stretch reads NNSTANKSSVNSMEQPALQGSSRLSPGTDSSSNL. Ser249 carries the post-translational modification Phosphoserine. Lys262 participates in a covalent cross-link: Glycyl lysine isopeptide (Lys-Gly) (interchain with G-Cter in SUMO2). Phosphoserine is present on Ser268. Residues 283 to 314 are a coiled coil; the sequence is RITALLRRQADIESRARRLQKRLQVVQAKQVE. Lys331 participates in a covalent cross-link: Glycyl lysine isopeptide (Lys-Gly) (interchain with G-Cter in SUMO2). 2 disordered regions span residues 399–426 and 733–857; these read DSDVTDSSSGGESDIEEEELTRADPEQR and TAKL…RRGE. Composition is skewed to basic and acidic residues over residues 741-753 and 780-804; these read TRPDRTHRQHLDD and DPNHSKMRLRDHSSERSEVLKHHTD. Over residues 827–850 the composition is skewed to low complexity; the sequence is STSSDSPAPASSSSQVTASTSQQP. The required for activation of KAT8 histone acetyltransferase activity stretch occupies residues 850–882; the sequence is PVRRRRGESSFDINNIVIPMSVAATTRVEKLQY. The 152-residue stretch at 884–1035 folds into the PEHE domain; sequence EILTPSWREV…GLDEQSVQPW (152 aa). The segment at 910 to 928 is interaction with KAT8 HAT domain; the sequence is EDLSDAAFAALHAKCEEME. The tract at residues 938–1034 is disordered; sequence VPPQRRGSRS…LGLDEQSVQP (97 aa). The segment covering 955–965 has biased composition (polar residues); the sequence is TTPQLGSANPS. Low complexity predominate over residues 975 to 988; the sequence is SSSHSLSEYSHGQS. Phosphoserine is present on residues Ser991 and Ser994. Thr1003 is modified (phosphothreonine). Residues 1008–1019 show a composition bias toward basic and acidic residues; that stretch reads DTPRHLASEDTR. Ser1045 carries the phosphoserine modification. Residues 1058-1105 are disordered; it reads ERAARCTRRTSGSKTGRETEAAPTSPPIVPLKSRHLVAAATAQRPTHR.

In terms of assembly, component of the NSL complex at least composed of MOF/KAT8, KANSL1, KANSL2, KANSL3, MCRS1, PHF20, OGT1/OGT, WDR5 and HCFC1. Interacts (via PEHE domain) with KAT8 (via HAT domain); the interaction is direct. Component of some MLL1/MLL complex, at least composed of the core components KMT2A/MLL1, ASH2L, HCFC1, WDR5 and RBBP5, as well as the facultative components BACC1, CHD8, E2F6, HSP70, INO80C, KANSL1, LAS1L, MAX, MCRS1, MGA, KAT8/MOF, PELP1, PHF20, PRP31, RING2, RUVB1/TIP49A, RUVB2/TIP49B, SENP3, TAF1, TAF4, TAF6, TAF7, TAF9 and TEX10. As to expression, expressed in the brain.

Its subcellular location is the nucleus. The protein resides in the chromosome. It is found in the centromere. It localises to the kinetochore. The protein localises to the mitochondrion. Its subcellular location is the cytoplasm. The protein resides in the cytoskeleton. It is found in the spindle pole. In terms of biological role, non-catalytic component of the NSL histone acetyltransferase complex, a multiprotein complex that mediates histone H4 acetylation at 'Lys-5'- and 'Lys-8' (H4K5ac and H4K8ac) at transcription start sites and promotes transcription initiation. The NSL complex also acts as a regulator of gene expression in mitochondria. In addition to its role in transcription, KANSL1 also plays an essential role in spindle assembly during mitosis. Associates with microtubule ends and contributes to microtubule stability. The sequence is that of KAT8 regulatory NSL complex subunit 1 (KANSL1) from Homo sapiens (Human).